A 215-amino-acid chain; its full sequence is MTSRGAARPNGQSQASKICQFKLVLLGESAVGKSSLVLRFVKGQFHEYQESTIGAAFLTQSVCLDDTTVKFEIWDTAGQERYHSLAPMYYRGAQAAIVVYDITNQETFARAKTWVKELQRQASPSIVIALAGNKADLASKRMVEYEEAQAYADDNSLLFMETSAKTAMNVNDLFLAIAKKLPKSEPQSTSGAAGRSRGVDLHEQTQQNKSQCCSN.

GTP is bound by residues S29, A30, G32, K33, S34, S35, H46, E47, T52, G78, N133, K134, D136, A164, and K165. S34 is a binding site for Mg(2+). 2 consecutive short sequence motifs (switch) follow at residues 44–56 and 77–93; these read QFHEYQESTIGAA and AGQERYHSLAPMYYRGA. A Mg(2+)-binding site is contributed by T52. Residues 184–215 are disordered; sequence SEPQSTSGAAGRSRGVDLHEQTQQNKSQCCSN. Residues 204 to 215 are compositionally biased toward polar residues; sequence QTQQNKSQCCSN. 2 S-geranylgeranyl cysteine lipidation sites follow: C212 and C213.

It belongs to the small GTPase superfamily. Rab family. It depends on Mg(2+) as a cofactor.

It is found in the cell membrane. It localises to the early endosome membrane. It catalyses the reaction GTP + H2O = GDP + phosphate + H(+). Regulated by guanine nucleotide exchange factors (GEFs) which promote the exchange of bound GDP for free GTP. Regulated by GTPase activating proteins (GAPs) which increase the GTP hydrolysis activity. Inhibited by GDP dissociation inhibitors (GDIs). Functionally, the small GTPases Rab are key regulators of intracellular membrane trafficking, from the formation of transport vesicles to their fusion with membranes. Rabs cycle between an inactive GDP-bound form and an active GTP-bound form that is able to recruit to membranes different sets of downstream effectors directly responsible for vesicle formation, movement, tethering and fusion. This Gallus gallus (Chicken) protein is Ras-related protein Rab-5B (RAB5B).